Here is a 150-residue protein sequence, read N- to C-terminus: Cytochrome c-type biogenesis protein CcmE (150 aa).

Over 1 to 7 the chain is Cytoplasmic; that stretch reads MTRKQKR. Residues 8–28 form a helical; Signal-anchor for type II membrane protein membrane-spanning segment; it reads LAIIGGGVGFLTAAVLLVMFA. At 29–150 the chain is on the periplasmic side; the sequence is FSQAVAYFYV…VTLGGEENIR (122 aa). Residues H123 and Y127 each coordinate heme.

Belongs to the CcmE/CycJ family.

Its subcellular location is the cell inner membrane. Functionally, heme chaperone required for the biogenesis of c-type cytochromes. Transiently binds heme delivered by CcmC and transfers the heme to apo-cytochromes in a process facilitated by CcmF and CcmH. The protein is Cytochrome c-type biogenesis protein CcmE of Sinorhizobium medicae (strain WSM419) (Ensifer medicae).